The primary structure comprises 417 residues: MAP kinase-interacting serine/threonine-protein kinase 1 (417 aa).

The segment at 1 to 20 (MVSSQPVPIDDGGKRRKKKR) is disordered. In terms of domain architecture, Protein kinase spans 37–321 (RLTDELLGEG…AAQVLQHPWL (285 aa)). ATP contacts are provided by residues 43-51 (LGEGAYAKV) and K66. The active-site Proton acceptor is the D158. Positions 397–417 (AHARKGGSHLTHTTVTSQGAT) are disordered. Positions 406-417 (LTHTTVTSQGAT) are enriched in polar residues.

Belongs to the protein kinase superfamily. CAMK Ser/Thr protein kinase family. Mg(2+) is required as a cofactor.

The catalysed reaction is L-seryl-[protein] + ATP = O-phospho-L-seryl-[protein] + ADP + H(+). It catalyses the reaction L-threonyl-[protein] + ATP = O-phospho-L-threonyl-[protein] + ADP + H(+). May play a role in the response to environmental stress and cytokines. Appears to regulate translation by phosphorylating EIF4E, thus increasing the affinity of this protein for the 7-methylguanosine-containing mRNA cap. The polypeptide is MAP kinase-interacting serine/threonine-protein kinase 1 (mknk1) (Xenopus tropicalis (Western clawed frog)).